Reading from the N-terminus, the 276-residue chain is Phosphatidylcholine synthase (276 aa).

Over 1–30 (MGGQKEMADSVKTKLTGKLKAKKVTAPQAK) the chain is Cytoplasmic. Residues 31 to 51 (AFSVHLLTASGSFLAFLSVVA) traverse the membrane as a helical segment. The Periplasmic portion of the chain corresponds to 52–57 (ASDGRY). The helical transmembrane segment at 58 to 78 (TAMWWWLGLALFVDGIDGPIA) threads the bilayer. Over 79 to 91 (RKLEVKYVLPNWS) the chain is Cytoplasmic. The helical transmembrane segment at 92 to 112 (GELLDSIIDYVTYVLIPAFAL) threads the bilayer. The Periplasmic portion of the chain corresponds to 113–115 (YQS). Residues 116–136 (GFMGTNLSFISGAIIVVSSAI) traverse the membrane as a helical segment. Residues 137–146 (YYADTGMKTK) are Cytoplasmic-facing. The chain crosses the membrane as a helical span at residues 147–167 (ENFFKGFPVVWNMVVFTLFIV). Residues 168–171 (RPGE) are Periplasmic-facing. The chain crosses the membrane as a helical span at residues 172–192 (WVAFGTVVASAILSFLPINFL). Topologically, residues 193 to 202 (HPVRVVRLRP) are cytoplasmic. The helical transmembrane segment at 203–223 (LNLTIFLLWCAFGVIALYYML) threads the bilayer. At 224 to 230 (DAPLWVR) the chain is on the periplasmic side. Residues 231-251 (IGISVTGLYIYFIGAIMQLFP) form a helical membrane-spanning segment. At 252–276 (SLGREAALAKARKLVEKQQKSGEAP) the chain is on the cytoplasmic side.

It belongs to the CDP-alcohol phosphatidyltransferase class-I family. Mn(2+) is required as a cofactor.

The protein localises to the cell inner membrane. The enzyme catalyses a CDP-1,2-diacyl-sn-glycerol + choline = a 1,2-diacyl-sn-glycero-3-phosphocholine + CMP + H(+). In terms of biological role, condenses choline with CDP-diglyceride to produce phosphatidylcholine and CMP. The chain is Phosphatidylcholine synthase from Brucella melitensis biotype 1 (strain ATCC 23456 / CCUG 17765 / NCTC 10094 / 16M).